The sequence spans 275 residues: Large ribosomal subunit protein uL2 (275 aa).

The interval 222-275 (GKVMNPVDHPHGGGEGRNPIGRNPSTPWGKLAMGVKTRGNKKSDRLIVKRRNKK) is disordered.

It belongs to the universal ribosomal protein uL2 family. Part of the 50S ribosomal subunit. Forms a bridge to the 30S subunit in the 70S ribosome.

Functionally, one of the primary rRNA binding proteins. Required for association of the 30S and 50S subunits to form the 70S ribosome, for tRNA binding and peptide bond formation. It has been suggested to have peptidyltransferase activity; this is somewhat controversial. Makes several contacts with the 16S rRNA in the 70S ribosome. The chain is Large ribosomal subunit protein uL2 from Desulforamulus reducens (strain ATCC BAA-1160 / DSM 100696 / MI-1) (Desulfotomaculum reducens).